The following is a 261-amino-acid chain: MASSKERESLVYIARLAEQAERYDEMVDAMKNVANLDVELTVEERNLLSVGYKNVVGSRRASWRILSSIEQKEDARGNEQNVKRIQGYRQKVESELTDICNNIMTVIDEHLIPSCTAGESTVFYYKMKGDYYRYLAEFKTGDDKKEVSDLSLKAYQTATTTAEAELPITHPIRLGLALNFSVFYYEIMNSPERACQLAKQVFDEAISELDSLNEDNYKDGTLILQLLRDNLTLWTSDIPEDGEEAPKGDAANKVGAGEDAE.

The segment at 237–261 is disordered; sequence DIPEDGEEAPKGDAANKVGAGEDAE.

It belongs to the 14-3-3 family. Homodimer.

This is 14-3-3 protein 8 (TFT8) from Solanum lycopersicum (Tomato).